We begin with the raw amino-acid sequence, 338 residues long: 1-aminocyclopropane-1-carboxylate deaminase (338 aa).

At Lys-51 the chain carries N6-(pyridoxal phosphate)lysine. The Nucleophile role is filled by Ser-78.

Belongs to the ACC deaminase/D-cysteine desulfhydrase family. Homotrimer. Pyridoxal 5'-phosphate is required as a cofactor.

It carries out the reaction 1-aminocyclopropane-1-carboxylate + H2O = 2-oxobutanoate + NH4(+). Functionally, catalyzes a cyclopropane ring-opening reaction, the irreversible conversion of 1-aminocyclopropane-1-carboxylate (ACC) to ammonia and alpha-ketobutyrate. Allows growth on ACC as a nitrogen source. This Pseudomonas fluorescens protein is 1-aminocyclopropane-1-carboxylate deaminase.